We begin with the raw amino-acid sequence, 261 residues long: Mite allergen Der p 3 (261 aa).

A signal peptide spans 1–18 (MIIYNILIVLLLAINTLA). A propeptide spanning residues 19–29 (NPILPASPNAT) is cleaved from the precursor. The region spanning 30-260 (IVGGEKALAG…FIDWIESKRS (231 aa)) is the Peptidase S1 domain. A disulfide bridge connects residues C54 and C70. Catalysis depends on charge relay system residues H69 and D114. 2 disulfide bridges follow: C181/C198 and C210/C236. S214 serves as the catalytic Charge relay system.

The protein belongs to the peptidase S1 family.

It localises to the secreted. The polypeptide is Mite allergen Der p 3 (DERP3) (Dermatophagoides pteronyssinus (European house dust mite)).